The primary structure comprises 482 residues: tRNA sulfurtransferase (482 aa).

Residues 61 to 165 (LAIRDALTRI…DDRLLLIKGR (105 aa)) enclose the THUMP domain. Residues 183–184 (LI), Lys-265, Gly-287, and Gln-296 contribute to the ATP site. An intrachain disulfide couples Cys-344 to Cys-456. The Rhodanese domain occupies 404–482 (FGPNDVILDI…GFNNVKVYRP (79 aa)). Catalysis depends on Cys-456, which acts as the Cysteine persulfide intermediate.

It belongs to the ThiI family.

The protein resides in the cytoplasm. It catalyses the reaction [ThiI sulfur-carrier protein]-S-sulfanyl-L-cysteine + a uridine in tRNA + 2 reduced [2Fe-2S]-[ferredoxin] + ATP + H(+) = [ThiI sulfur-carrier protein]-L-cysteine + a 4-thiouridine in tRNA + 2 oxidized [2Fe-2S]-[ferredoxin] + AMP + diphosphate. The enzyme catalyses [ThiS sulfur-carrier protein]-C-terminal Gly-Gly-AMP + S-sulfanyl-L-cysteinyl-[cysteine desulfurase] + AH2 = [ThiS sulfur-carrier protein]-C-terminal-Gly-aminoethanethioate + L-cysteinyl-[cysteine desulfurase] + A + AMP + 2 H(+). Its pathway is cofactor biosynthesis; thiamine diphosphate biosynthesis. Catalyzes the ATP-dependent transfer of a sulfur to tRNA to produce 4-thiouridine in position 8 of tRNAs, which functions as a near-UV photosensor. Also catalyzes the transfer of sulfur to the sulfur carrier protein ThiS, forming ThiS-thiocarboxylate. This is a step in the synthesis of thiazole, in the thiamine biosynthesis pathway. The sulfur is donated as persulfide by IscS. This Escherichia fergusonii (strain ATCC 35469 / DSM 13698 / CCUG 18766 / IAM 14443 / JCM 21226 / LMG 7866 / NBRC 102419 / NCTC 12128 / CDC 0568-73) protein is tRNA sulfurtransferase.